Here is a 224-residue protein sequence, read N- to C-terminus: Inhibitor of apoptosis protein (224 aa).

Residues 29 to 92 (VDARNQSFAI…GFWSRNCGFM (64 aa)) form a BIR repeat. Zn(2+)-binding residues include Cys62, Cys65, His82, and Cys89. The C4-type zinc finger occupies 189 to 207 (CMTCGIEPIKKDENFCNAC).

It belongs to the asfivirus IAP family. Interacts with subunit p17 of host CASP3.

Its subcellular location is the host cytoplasm. The protein localises to the virion. Prevent apoptosis of host cell by inhibiting caspase-3/CASP3 activation to promote the viral replication. Also induces the activation of host NF-kappaB. This chain is Inhibitor of apoptosis protein, found in Ornithodoros (relapsing fever ticks).